A 136-amino-acid chain; its full sequence is Large ribosomal subunit protein bL12 (136 aa).

Belongs to the bacterial ribosomal protein bL12 family. As to quaternary structure, homodimer. Part of the ribosomal stalk of the 50S ribosomal subunit. Forms a multimeric L10(L12)X complex, where L10 forms an elongated spine to which 2 to 4 L12 dimers bind in a sequential fashion. Binds GTP-bound translation factors.

Its function is as follows. Forms part of the ribosomal stalk which helps the ribosome interact with GTP-bound translation factors. Is thus essential for accurate translation. The sequence is that of Large ribosomal subunit protein bL12 from Synechococcus sp. (strain JA-2-3B'a(2-13)) (Cyanobacteria bacterium Yellowstone B-Prime).